Here is a 159-residue protein sequence, read N- to C-terminus: E3 ubiquitin ligase complex SCF subunit sconC (159 aa).

Positions Ile101–Glu159 are interaction with the F-box domain of F-box proteins.

The protein belongs to the SKP1 family. As to quaternary structure, component of the SCF (SKP1-CUL1-F-box protein) E3 ubiquitin ligase complexes.

It functions in the pathway protein modification; protein ubiquitination. Essential component of the SCF (SKP1-CUL1-F-box protein) E3 ubiquitin ligase complexes, which mediate the ubiquitination and subsequent proteasomal degradation of target proteins. Controls sulfur metabolite repression, probably by mediating the inactivation or degradation of the metR transcription factor. The protein is E3 ubiquitin ligase complex SCF subunit sconC (sconC) of Aspergillus clavatus (strain ATCC 1007 / CBS 513.65 / DSM 816 / NCTC 3887 / NRRL 1 / QM 1276 / 107).